The following is a 99-amino-acid chain: UPF0045 protein MTH_1187 (99 aa).

It belongs to the UPF0045 family. As to quaternary structure, homotetramer.

This is UPF0045 protein MTH_1187 from Methanothermobacter thermautotrophicus (strain ATCC 29096 / DSM 1053 / JCM 10044 / NBRC 100330 / Delta H) (Methanobacterium thermoautotrophicum).